Consider the following 226-residue polypeptide: PKHD-type hydroxylase Plav_0377 (226 aa).

The Fe2OG dioxygenase domain maps to 78 to 178 (KVLPPRFNRY…RLASFFWVQS (101 aa)). Residues His-96, Asp-98, and His-159 each contribute to the Fe cation site. A 2-oxoglutarate-binding site is contributed by Arg-169.

Fe(2+) serves as cofactor. The cofactor is L-ascorbate.

This chain is PKHD-type hydroxylase Plav_0377, found in Parvibaculum lavamentivorans (strain DS-1 / DSM 13023 / NCIMB 13966).